A 92-amino-acid chain; its full sequence is UPF0223 protein Sez_0908 (92 aa).

The protein belongs to the UPF0223 family.

In Streptococcus equi subsp. zooepidemicus (strain MGCS10565), this protein is UPF0223 protein Sez_0908.